An 85-amino-acid polypeptide reads, in one-letter code: UPF0213 protein NP_0776A (85 aa).

Residues 3-78 (ADHYVYVLSC…KSLSRAKKER (76 aa)) form the GIY-YIG domain. The segment covering 58–70 (KSAAMQREHEIKS) has biased composition (basic and acidic residues). Positions 58–85 (KSAAMQREHEIKSLSRAKKERLVADETG) are disordered.

The protein belongs to the UPF0213 family.

The chain is UPF0213 protein NP_0776A from Natronomonas pharaonis (strain ATCC 35678 / DSM 2160 / CIP 103997 / JCM 8858 / NBRC 14720 / NCIMB 2260 / Gabara) (Halobacterium pharaonis).